The sequence spans 140 residues: ATP synthase epsilon chain (140 aa).

The protein belongs to the ATPase epsilon chain family. As to quaternary structure, F-type ATPases have 2 components, CF(1) - the catalytic core - and CF(0) - the membrane proton channel. CF(1) has five subunits: alpha(3), beta(3), gamma(1), delta(1), epsilon(1). CF(0) has three main subunits: a, b and c.

The protein localises to the cell inner membrane. Its function is as follows. Produces ATP from ADP in the presence of a proton gradient across the membrane. This chain is ATP synthase epsilon chain, found in Neisseria meningitidis serogroup C (strain 053442).